Here is a 174-residue protein sequence, read N- to C-terminus: uncharacterized protein (174 aa).

This is an uncharacterized protein from Caenorhabditis elegans.